The primary structure comprises 355 residues: Protein-glutamate methylesterase/protein-glutamine glutaminase 3 (355 aa).

Residues 5-122 (KVLIVDDSAV…KQFLEESRVR (118 aa)) enclose the Response regulatory domain. Asp56 bears the 4-aspartylphosphate mark. The 191-residue stretch at 165–355 (IQTTEKVVVV…IAREVLRLCG (191 aa)) folds into the CheB-type methylesterase domain. Active-site residues include Ser177, His203, and Asp299.

The protein belongs to the CheB family. Post-translationally, phosphorylated by CheA. Phosphorylation of the N-terminal regulatory domain activates the methylesterase activity.

Its subcellular location is the cytoplasm. It carries out the reaction [protein]-L-glutamate 5-O-methyl ester + H2O = L-glutamyl-[protein] + methanol + H(+). It catalyses the reaction L-glutaminyl-[protein] + H2O = L-glutamyl-[protein] + NH4(+). In terms of biological role, involved in chemotaxis. Part of a chemotaxis signal transduction system that modulates chemotaxis in response to various stimuli. Catalyzes the demethylation of specific methylglutamate residues introduced into the chemoreceptors (methyl-accepting chemotaxis proteins or MCP) by CheR. Also mediates the irreversible deamidation of specific glutamine residues to glutamic acid. The chain is Protein-glutamate methylesterase/protein-glutamine glutaminase 3 from Geobacter metallireducens (strain ATCC 53774 / DSM 7210 / GS-15).